The sequence spans 162 residues: Phosphopantetheine adenylyltransferase (162 aa).

Ser9 provides a ligand contact to substrate. ATP is bound by residues Ser9–Phe10 and His17. The substrate site is built by Lys41, Ile77, and Lys91. ATP contacts are provided by residues Gly92 to Arg94, Glu102, and Tyr126 to Ser132.

The protein belongs to the bacterial CoaD family. As to quaternary structure, homohexamer. The cofactor is Mg(2+).

It is found in the cytoplasm. It catalyses the reaction (R)-4'-phosphopantetheine + ATP + H(+) = 3'-dephospho-CoA + diphosphate. It participates in cofactor biosynthesis; coenzyme A biosynthesis; CoA from (R)-pantothenate: step 4/5. In terms of biological role, reversibly transfers an adenylyl group from ATP to 4'-phosphopantetheine, yielding dephospho-CoA (dPCoA) and pyrophosphate. This is Phosphopantetheine adenylyltransferase from Frankia casuarinae (strain DSM 45818 / CECT 9043 / HFP020203 / CcI3).